The chain runs to 405 residues: Imidazolonepropionase (405 aa).

Fe(3+) is bound by residues H73 and H75. Zn(2+)-binding residues include H73 and H75. 4-imidazolone-5-propanoate is bound by residues R82, Y145, and H178. Residue Y145 participates in N-formimidoyl-L-glutamate binding. Residue H243 participates in Fe(3+) binding. H243 lines the Zn(2+) pocket. Q246 serves as a coordination point for 4-imidazolone-5-propanoate. D318 provides a ligand contact to Fe(3+). A Zn(2+)-binding site is contributed by D318. N-formimidoyl-L-glutamate is bound by residues N320 and G322. T323 serves as a coordination point for 4-imidazolone-5-propanoate.

The protein belongs to the metallo-dependent hydrolases superfamily. HutI family. The cofactor is Zn(2+). Requires Fe(3+) as cofactor.

The protein resides in the cytoplasm. It catalyses the reaction 4-imidazolone-5-propanoate + H2O = N-formimidoyl-L-glutamate. It participates in amino-acid degradation; L-histidine degradation into L-glutamate; N-formimidoyl-L-glutamate from L-histidine: step 3/3. Catalyzes the hydrolytic cleavage of the carbon-nitrogen bond in imidazolone-5-propanoate to yield N-formimidoyl-L-glutamate. It is the third step in the universal histidine degradation pathway. The protein is Imidazolonepropionase of Brucella suis biovar 1 (strain 1330).